The chain runs to 1217 residues: ATP-dependent RNA helicase DHX30 (1217 aa).

Phosphoserine is present on residues Asp15 and Ser29. One can recognise a DRBM domain in the interval 76–144; that stretch reads PKNLLNSVIG…QAAAAACQLF (69 aa). The segment at 176–223 is disordered; sequence WWRPEPTMPPTSWRQLNPENIRPGGPAGLSRSLGREEEEDEEEELEEG. The span at 211-223 shows a compositional bias: acidic residues; that stretch reads EEEEDEEEELEEG. Phosphoserine occurs at positions 249 and 403. The region spanning 467-635 is the Helicase ATP-binding domain; it reads LSAIEQHPVV…FGGCPVIKVP (169 aa). 480-487 contributes to the ATP binding site; that stretch reads GDTGCGKT. Positions 582–585 match the DEAH box motif; the sequence is DEVH. Residues 677-850 form the Helicase C-terminal domain; the sequence is LVTDLVLHID…NLVLQAKIHM (174 aa).

It belongs to the DEAD box helicase family. DEAH subfamily. Identified in a complex with TFAM and SSBP1. Interacts (via N-terminus) with ZC3HAV1 (via N-terminal domain) in an RNA-independent manner. Found in a complex with GRSF1, DDX28, FASTKD2 and FASTKD5. In terms of processing, phosphorylated on Ser-15. Expressed in the heart, brain, spleen, lung, liver, skeletal muscle, kidney, and testis. Expression is strongest in the testis and brain, while the lowest levels of expression are found in the spleen and lung.

It localises to the cytoplasm. It is found in the mitochondrion. Its subcellular location is the mitochondrion matrix. The protein localises to the mitochondrion nucleoid. The catalysed reaction is ATP + H2O = ADP + phosphate + H(+). RNA-dependent helicase. Plays an important role in the assembly of the mitochondrial large ribosomal subunit. Required for optimal function of the zinc-finger antiviral protein ZC3HAV1. Associates with mitochondrial DNA. Involved in nervous system development and differentiation through its involvement in the up-regulation of a number of genes which are required for neurogenesis, including GSC, NCAM1, neurogenin, and NEUROD. The chain is ATP-dependent RNA helicase DHX30 (Dhx30) from Mus musculus (Mouse).